The chain runs to 118 residues: Basic phospholipase A2 4 (118 aa).

7 disulfides stabilise this stretch: Cys11–Cys71, Cys27–Cys117, Cys29–Cys45, Cys44–Cys98, Cys51–Cys91, Cys60–Cys84, and Cys78–Cys89. Tyr28, Gly30, and Gly32 together coordinate Ca(2+). Residue His48 is part of the active site. Asp49 lines the Ca(2+) pocket. Asp92 is an active-site residue.

This sequence belongs to the phospholipase A2 family. Group I subfamily. D49 sub-subfamily. As to quaternary structure, monomer. Ca(2+) is required as a cofactor. Expressed by the venom gland.

It is found in the secreted. It carries out the reaction a 1,2-diacyl-sn-glycero-3-phosphocholine + H2O = a 1-acyl-sn-glycero-3-phosphocholine + a fatty acid + H(+). PLA2 catalyzes the calcium-dependent hydrolysis of the 2-acyl groups in 3-sn-phosphoglycerides. In Laticauda semifasciata (Black-banded sea krait), this protein is Basic phospholipase A2 4.